A 118-amino-acid chain; its full sequence is 5-hydroxyisourate hydrolase (118 aa).

H11, R51, and Y115 together coordinate substrate.

It belongs to the transthyretin family. 5-hydroxyisourate hydrolase subfamily. As to quaternary structure, homotetramer.

It is found in the peroxisome. The enzyme catalyses 5-hydroxyisourate + H2O = 5-hydroxy-2-oxo-4-ureido-2,5-dihydro-1H-imidazole-5-carboxylate + H(+). The protein operates within purine metabolism; urate degradation; (S)-allantoin from urate: step 2/3. Its function is as follows. Catalyzes the hydrolysis of 5-hydroxyisourate (HIU) to 2-oxo-4-hydroxy-4-carboxy-5-ureidoimidazoline (OHCU). In Mus musculus (Mouse), this protein is 5-hydroxyisourate hydrolase (Urah).